The primary structure comprises 701 residues: Nucleolar transcription factor 1-B (701 aa).

A disordered region spans residues methionine 1–glutamine 21. DNA-binding regions (HMG box) lie at residues proline 112–arginine 180, proline 196–methionine 264, threonine 298–leucine 362, proline 422–arginine 489, and lysine 508–methionine 574. The disordered stretch occupies residues methionine 382–lysine 426. Residues glutamine 408–lysine 426 show a composition bias toward basic and acidic residues. Positions alanine 584–asparagine 701 are disordered. The span at threonine 597 to serine 612 shows a compositional bias: polar residues. Residues aspartate 615–glutamate 682 show a composition bias toward acidic residues. Residues serine 683 to serine 695 are compositionally biased toward low complexity.

XUBF consists of 2 polypeptides of 82 and 85 kDa, encoded by the same or closely related genes.

It is found in the nucleus. Its function is as follows. UBF recognizes the ribosomal RNA gene promotor and activates transcription mediated by RNA polymerase I through cooperative interactions with the species-specific factor SL1. It binds specifically to the upstream control element. In Xenopus laevis (African clawed frog), this protein is Nucleolar transcription factor 1-B (ubtf-b).